A 444-amino-acid chain; its full sequence is ATP-dependent 6-phosphofructokinase 2 (444 aa).

Ser-55 is subject to Phosphoserine. ATP-binding positions include Gly-86, Arg-149–Gly-150, and Gly-174–Thr-177. Asp-175 is a binding site for Mg(2+). Residues Thr-203–Asp-205, Met-248–Arg-250, Glu-304, and Tyr-362–Arg-365 each bind substrate. Asp-205 acts as the Proton acceptor in catalysis.

It belongs to the phosphofructokinase type A (PFKA) family. PPi-dependent PFK group II subfamily. Atypical ATP-dependent clade 'X' sub-subfamily. In terms of assembly, homotetramer. Requires Mg(2+) as cofactor. In terms of tissue distribution, mostly expressed in roots and stems.

The protein localises to the cytoplasm. It catalyses the reaction beta-D-fructose 6-phosphate + ATP = beta-D-fructose 1,6-bisphosphate + ADP + H(+). Its pathway is carbohydrate degradation; glycolysis; D-glyceraldehyde 3-phosphate and glycerone phosphate from D-glucose: step 3/4. Allosterically activated by AMP. In terms of biological role, catalyzes the phosphorylation of D-fructose 6-phosphate to fructose 1,6-bisphosphate by ATP, the first committing step of glycolysis. The sequence is that of ATP-dependent 6-phosphofructokinase 2 from Arabidopsis thaliana (Mouse-ear cress).